Consider the following 161-residue polypeptide: RNA pyrophosphohydrolase (161 aa).

One can recognise a Nudix hydrolase domain in the interval 6–149 (GYRPNVGIIL…KREVYRRAMR (144 aa)). The Nudix box signature appears at 38–59 (GGIKKDESPEEALFRELKEEVG).

This sequence belongs to the Nudix hydrolase family. RppH subfamily. A divalent metal cation is required as a cofactor.

Its function is as follows. Accelerates the degradation of transcripts by removing pyrophosphate from the 5'-end of triphosphorylated RNA, leading to a more labile monophosphorylated state that can stimulate subsequent ribonuclease cleavage. The chain is RNA pyrophosphohydrolase from Hahella chejuensis (strain KCTC 2396).